A 312-amino-acid chain; its full sequence is MSVIDVNPIPLAPRISEAGVADYIALLKPRVMSLVVFTALVGLLMAPGSFHPVLAITAIICIAVGGGAAGALNMWYEDDIDAKMTRTANRPIPRGRVTRPEALTFGMTLAFFSVVTLGILVNWIAAGLLAFTIFFYVVIYTMWLKRWTAQNIVIGGAAGALPPVVAWASVTGSLAVEPILLFLIIFFWTPPHFWALALFRNDDYARAGVPMLPVVAGPDHTRLQILLYTVALVAVAAAPWPLGYFDVIYGVASLALGGWMLVLAVRVYRHRSGSAALRATRNLFKFSILYLFALFAILLVEVVAAAVLRLIG.

The next 8 helical transmembrane spans lie at 31–51 (VMSL…GSFH), 52–72 (PVLA…AGAL), 119–139 (ILVN…YVVI), 152–172 (IVIG…SVTG), 179–199 (ILLF…LALF), 225–245 (ILLY…LGYF), 247–267 (VIYG…AVRV), and 288–308 (ILYL…AAVL).

It belongs to the UbiA prenyltransferase family. Protoheme IX farnesyltransferase subfamily.

The protein resides in the cell inner membrane. The enzyme catalyses heme b + (2E,6E)-farnesyl diphosphate + H2O = Fe(II)-heme o + diphosphate. Its pathway is porphyrin-containing compound metabolism; heme O biosynthesis; heme O from protoheme: step 1/1. Converts heme B (protoheme IX) to heme O by substitution of the vinyl group on carbon 2 of heme B porphyrin ring with a hydroxyethyl farnesyl side group. In Rhodopseudomonas palustris (strain ATCC BAA-98 / CGA009), this protein is Protoheme IX farnesyltransferase.